A 418-amino-acid polypeptide reads, in one-letter code: Magnesium transporter MRS2-E (418 aa).

The disordered stretch occupies residues 119–146 (DAAPSTNPAAADRGNGTEQGDQGSVPGL). Residues 166-232 (VCLEHACKDL…RDELEHLLDD (67 aa)) adopt a coiled-coil conformation. Residues 258–268 (DSHKYASVDHD) are compositionally biased toward basic and acidic residues. The tract at residues 258 to 287 (DSHKYASVDHDDDREEEDHDDETESGRESS) is disordered. The segment covering 269-280 (DDREEEDHDDET) has biased composition (acidic residues). A helical transmembrane segment spans residues 344–364 (GVMLTTATVVVTAGIVVVSLF). The Required for magnesium transport activity signature appears at 365–367 (GMN). A helical transmembrane segment spans residues 389–409 (FWETTFGTVAGCIAIYLLAIY).

The protein belongs to the CorA metal ion transporter (MIT) (TC 1.A.35.5) family.

The protein resides in the membrane. Magnesium transporter that may mediate the influx of magnesium. This Oryza sativa subsp. indica (Rice) protein is Magnesium transporter MRS2-E (MRS2-E).